We begin with the raw amino-acid sequence, 68 residues long: Copper transport protein ATOX1 (68 aa).

Residues 1–63 form the HMA domain; sequence MPKHEFSVDM…TLEKTGKAVS (63 aa). Cu cation-binding residues include cysteine 12 and cysteine 15. A Phosphoserine modification is found at serine 47. Residue lysine 60 is modified to N6-acetyllysine.

It belongs to the ATX1 family. Homodimer. Interacts with ATP7B. Interacts with ATP7A. Interacts (via dimer form) with SLC31A1 (via C-terminal domain); this interaction improves ATOX1 stability and controls intracellular Cu(I) levels.

In terms of biological role, binds and deliver cytosolic copper to the copper ATPase proteins. May be important in cellular antioxidant defense. This Canis lupus familiaris (Dog) protein is Copper transport protein ATOX1.